We begin with the raw amino-acid sequence, 249 residues long: Aspartate/glutamate leucyltransferase (249 aa).

Belongs to the R-transferase family. Bpt subfamily.

The protein localises to the cytoplasm. It carries out the reaction N-terminal L-glutamyl-[protein] + L-leucyl-tRNA(Leu) = N-terminal L-leucyl-L-glutamyl-[protein] + tRNA(Leu) + H(+). The catalysed reaction is N-terminal L-aspartyl-[protein] + L-leucyl-tRNA(Leu) = N-terminal L-leucyl-L-aspartyl-[protein] + tRNA(Leu) + H(+). Its function is as follows. Functions in the N-end rule pathway of protein degradation where it conjugates Leu from its aminoacyl-tRNA to the N-termini of proteins containing an N-terminal aspartate or glutamate. In Brucella suis (strain ATCC 23445 / NCTC 10510), this protein is Aspartate/glutamate leucyltransferase.